The sequence spans 275 residues: 2,3,4,5-tetrahydropyridine-2,6-dicarboxylate N-succinyltransferase (275 aa).

Substrate contacts are provided by R106 and D143.

Belongs to the transferase hexapeptide repeat family. As to quaternary structure, homotrimer.

Its subcellular location is the cytoplasm. It catalyses the reaction (S)-2,3,4,5-tetrahydrodipicolinate + succinyl-CoA + H2O = (S)-2-succinylamino-6-oxoheptanedioate + CoA. Its pathway is amino-acid biosynthesis; L-lysine biosynthesis via DAP pathway; LL-2,6-diaminopimelate from (S)-tetrahydrodipicolinate (succinylase route): step 1/3. The polypeptide is 2,3,4,5-tetrahydropyridine-2,6-dicarboxylate N-succinyltransferase (Paraburkholderia xenovorans (strain LB400)).